We begin with the raw amino-acid sequence, 488 residues long: Malonate-semialdehyde dehydrogenase (488 aa).

The NAD(+) site is built by Ala150, Phe152, Lys176, Glu179, Arg180, Ser229, and Thr251. Cys284 serves as the catalytic Nucleophile. Glu382 serves as a coordination point for NAD(+).

The protein belongs to the aldehyde dehydrogenase family. IolA subfamily. In terms of assembly, homotetramer.

It catalyses the reaction 3-oxopropanoate + NAD(+) + CoA + H2O = hydrogencarbonate + acetyl-CoA + NADH + H(+). The enzyme catalyses 2-methyl-3-oxopropanoate + NAD(+) + CoA + H2O = propanoyl-CoA + hydrogencarbonate + NADH + H(+). It functions in the pathway polyol metabolism; myo-inositol degradation into acetyl-CoA; acetyl-CoA from myo-inositol: step 7/7. Functionally, catalyzes the oxidation of malonate semialdehyde (MSA) and methylmalonate semialdehyde (MMSA) into acetyl-CoA and propanoyl-CoA, respectively. Is involved in a myo-inositol catabolic pathway. Bicarbonate, and not CO2, is the end-product of the enzymatic reaction. The protein is Malonate-semialdehyde dehydrogenase of Listeria innocua serovar 6a (strain ATCC BAA-680 / CLIP 11262).